Consider the following 194-residue polypeptide: Ion-translocating oxidoreductase complex subunit B (194 aa).

The interval 1 to 26 (MSSILIAVIAIAALALVFGLILGFAS) is hydrophobic. A 4Fe-4S domain is found at 32–90 (ESDPIVEQIDAILPQTQCGQCGYPGCKPYAEAIANGDMINKCPPGGQATIEKLADLMGV). 12 residues coordinate [4Fe-4S] cluster: Cys-49, Cys-52, Cys-57, Cys-73, Cys-114, Cys-117, Cys-120, Cys-124, Cys-144, Cys-147, Cys-150, and Cys-154. 4Fe-4S ferredoxin-type domains follow at residues 105 to 134 (KVAF…GGTK) and 135 to 164 (ALHT…MIPV).

The protein belongs to the 4Fe4S bacterial-type ferredoxin family. RnfB subfamily. In terms of assembly, the complex is composed of six subunits: RnfA, RnfB, RnfC, RnfD, RnfE and RnfG. The cofactor is [4Fe-4S] cluster.

The protein resides in the cell inner membrane. Its function is as follows. Part of a membrane-bound complex that couples electron transfer with translocation of ions across the membrane. The chain is Ion-translocating oxidoreductase complex subunit B from Aliivibrio fischeri (strain ATCC 700601 / ES114) (Vibrio fischeri).